Reading from the N-terminus, the 328-residue chain is uncharacterized protein (328 aa).

Residues 1 to 25 (MKLFNFKKLSMLIAGFTLVTSPALA) form the signal peptide.

Belongs to the bacterial solute-binding protein 7 family.

It localises to the periplasm. This is an uncharacterized protein from Haemophilus influenzae (strain ATCC 51907 / DSM 11121 / KW20 / Rd).